Reading from the N-terminus, the 202-residue chain is Na(+)-translocating NADH-quinone reductase subunit E (202 aa).

The next 6 membrane-spanning stretches (helical) occupy residues Val5–Met25, Val35–Leu55, Phe81–Phe101, Gly114–Val134, Leu144–Ile164, and Leu180–Met200.

Belongs to the NqrDE/RnfAE family. In terms of assembly, composed of six subunits; NqrA, NqrB, NqrC, NqrD, NqrE and NqrF.

Its subcellular location is the cell inner membrane. The enzyme catalyses a ubiquinone + n Na(+)(in) + NADH + H(+) = a ubiquinol + n Na(+)(out) + NAD(+). NQR complex catalyzes the reduction of ubiquinone-1 to ubiquinol by two successive reactions, coupled with the transport of Na(+) ions from the cytoplasm to the periplasm. NqrA to NqrE are probably involved in the second step, the conversion of ubisemiquinone to ubiquinol. The protein is Na(+)-translocating NADH-quinone reductase subunit E of Psychrobacter sp. (strain PRwf-1).